Reading from the N-terminus, the 874-residue chain is Alanine--tRNA ligase (874 aa).

Zn(2+) is bound by residues H563, H567, C665, and H669.

Belongs to the class-II aminoacyl-tRNA synthetase family. Zn(2+) serves as cofactor.

It localises to the cytoplasm. It carries out the reaction tRNA(Ala) + L-alanine + ATP = L-alanyl-tRNA(Ala) + AMP + diphosphate. Catalyzes the attachment of alanine to tRNA(Ala) in a two-step reaction: alanine is first activated by ATP to form Ala-AMP and then transferred to the acceptor end of tRNA(Ala). Also edits incorrectly charged Ser-tRNA(Ala) and Gly-tRNA(Ala) via its editing domain. In Haemophilus ducreyi (strain 35000HP / ATCC 700724), this protein is Alanine--tRNA ligase.